Reading from the N-terminus, the 142-residue chain is Small ribosomal subunit protein bS6 (142 aa).

The tract at residues 96-142 is disordered; it reads VTGQSEMLKAEENRSERRERRERPEHDGSADGDDSDSDSDNSDNADE. Positions 103-124 are enriched in basic and acidic residues; it reads LKAEENRSERRERRERPEHDGS. Over residues 125-142 the composition is skewed to acidic residues; the sequence is ADGDDSDSDSDNSDNADE.

The protein belongs to the bacterial ribosomal protein bS6 family.

Functionally, binds together with bS18 to 16S ribosomal RNA. In Pseudomonas fluorescens (strain Pf0-1), this protein is Small ribosomal subunit protein bS6.